Here is a 36-residue protein sequence, read N- to C-terminus: Conotoxin Cl14.10 (36 aa).

Residues 1–2 constitute a propeptide that is removed on maturation; the sequence is NE.

Contains 2 disulfide bond. Expressed by the venom duct.

The protein localises to the secreted. The sequence is that of Conotoxin Cl14.10 from Californiconus californicus (California cone).